Here is a 625-residue protein sequence, read N- to C-terminus: Glutamyl-tRNA(Gln) amidotransferase subunit E (625 aa).

The protein belongs to the GatB/GatE family. GatE subfamily. In terms of assembly, heterodimer of GatD and GatE.

The enzyme catalyses L-glutamyl-tRNA(Gln) + L-glutamine + ATP + H2O = L-glutaminyl-tRNA(Gln) + L-glutamate + ADP + phosphate + H(+). Its function is as follows. Allows the formation of correctly charged Gln-tRNA(Gln) through the transamidation of misacylated Glu-tRNA(Gln) in organisms which lack glutaminyl-tRNA synthetase. The reaction takes place in the presence of glutamine and ATP through an activated gamma-phospho-Glu-tRNA(Gln). The GatDE system is specific for glutamate and does not act on aspartate. The sequence is that of Glutamyl-tRNA(Gln) amidotransferase subunit E from Caldivirga maquilingensis (strain ATCC 700844 / DSM 13496 / JCM 10307 / IC-167).